A 531-amino-acid polypeptide reads, in one-letter code: Putative cysteine ligase BshC (531 aa).

The stretch at 447–481 forms a coiled coil; it reads KAQEKKQTKGLDNLEKRLLKAEKKMHSEKLKKIIE.

This sequence belongs to the BshC family.

This chain is Putative cysteine ligase BshC, found in Flavobacterium psychrophilum (strain ATCC 49511 / DSM 21280 / CIP 103535 / JIP02/86).